A 207-amino-acid chain; its full sequence is Protein DMP1 (207 aa).

The disordered stretch occupies residues 1–20 (MSETSLLIPKTNSPASSENM). 4 consecutive transmembrane segments (helical) span residues 33 to 53 (LIKLLPTGTLFIYLLLNPVLT), 64 to 84 (VMSSILVALCSFSCVFSCFTD), 121 to 141 (IADFVHAGFVLAVFGTLVLLD), and 159 to 179 (LVMALPPAVGVASATIFALFP).

Belongs to the plant DMP1 protein family. As to expression, expressed in leaves, siliques and roots.

It localises to the endoplasmic reticulum membrane. Its subcellular location is the vacuole membrane. Its function is as follows. Involved in membrane remodeling including fission during breakdown of the endoplasmic reticulum (ER) and the tonoplast during leaf senescence and in membrane fusion during vacuole biogenesis in roots. This is Protein DMP1 from Arabidopsis thaliana (Mouse-ear cress).